The following is a 254-amino-acid chain: Putative epimerase LsrE (254 aa).

The helical transmembrane segment at 14-34 (VALLASYPLSVGILAGQWIAL) threads the bilayer. A divalent metal cation is bound by residues H50, D52, and H81. Residue D52 is the Proton acceptor of the active site. Substrate is bound by residues H81, 166–169 (GYGS), 199–201 (DGS), and 221–222 (GS). D199 provides a ligand contact to a divalent metal cation. The Proton donor role is filled by D199.

It belongs to the ribulose-phosphate 3-epimerase family. A divalent metal cation is required as a cofactor.

The protein localises to the cell membrane. The chain is Putative epimerase LsrE (lsrE) from Salmonella choleraesuis (strain SC-B67).